The sequence spans 620 residues: Chaperone protein HscA homolog (620 aa).

It belongs to the heat shock protein 70 family.

Its function is as follows. Chaperone involved in the maturation of iron-sulfur cluster-containing proteins. Has a low intrinsic ATPase activity which is markedly stimulated by HscB. The chain is Chaperone protein HscA homolog from Shewanella sp. (strain ANA-3).